The chain runs to 424 residues: 3-ketoacyl-CoA thiolase B, peroxisomal (424 aa).

The N-terminal 26 residues, 1-26, are a transit peptide targeting the peroxisome; it reads MHRLQVVLGHLAGRPESSSALQAAPC. The tract at residues 1-26 is PTS2-type peroxisomal targeting signal; that stretch reads MHRLQVVLGHLAGRPESSSALQAAPC. The active-site Acyl-thioester intermediate is the C123. K173 and K234 each carry N6-acetyllysine. CoA contacts are provided by R249, T252, and S276. The active-site Proton donor/acceptor is C408.

Belongs to the thiolase-like superfamily. Thiolase family. As to quaternary structure, homodimer. Interacts (via PTS2-type peroxisomal targeting signal region) with PEX7; leading to its translocation into peroxisomes. Mainly expressed in liver; weaker levels in kidney, intestine and white adipose tissue.

The protein resides in the peroxisome. The catalysed reaction is an acyl-CoA + acetyl-CoA = a 3-oxoacyl-CoA + CoA. It catalyses the reaction 2 acetyl-CoA = acetoacetyl-CoA + CoA. The enzyme catalyses hexanoyl-CoA + acetyl-CoA = 3-oxooctanoyl-CoA + CoA. It carries out the reaction tetradecanoyl-CoA + acetyl-CoA = 3-oxohexadecanoyl-CoA + CoA. The catalysed reaction is 3-oxohexadecanedioyl-CoA + CoA = tetradecanedioyl-CoA + acetyl-CoA. It catalyses the reaction 3-oxo-(6Z,9Z,12Z,15Z,18Z,21Z)-tetracosahexaenoyl-CoA + CoA = (4Z,7Z,10Z,13Z,16Z,19Z)-docosahexaenoyl-CoA + acetyl-CoA. The protein operates within lipid metabolism; peroxisomal fatty acid beta-oxidation. Responsible for the thiolytic cleavage of straight chain 3-keto fatty acyl-CoAs (3-oxoacyl-CoAs). Plays an important role in fatty acid peroxisomal beta-oxidation. Catalyzes the cleavage of short, medium, long, and very long straight chain 3-oxoacyl-CoAs. This is 3-ketoacyl-CoA thiolase B, peroxisomal from Mus musculus (Mouse).